Consider the following 811-residue polypeptide: Receptor-like protein 52 (811 aa).

The N-terminal stretch at 1 to 22 is a signal peptide; sequence MTFLPLLFIFFFLTSIPFPAFS. Topologically, residues 23-770 are extracellular; sequence QYNDRSTLLN…EDEEEVMNWT (748 aa). Residues Asn47, Asn64, Asn74, Asn93, Asn109, and Asn124 are each glycosylated (N-linked (GlcNAc...) asparagine). LRR repeat units lie at residues 62–86, 87–110, 112–134, 135–159, 161–183, and 184–208; these read AGNV…ICNF, PNLK…LYNC, KLQY…INRL, APKL…IGRI, KLKV…IGDL, and SELE…EFGK. The stretch at 211 to 233 is one LRR 7; degenerate repeat; the sequence is KLKYMWLEEMNLIGEISAVVFEN. N-linked (GlcNAc...) asparagine glycosylation is found at Asn233, Asn246, Asn260, Asn295, and Asn304. LRR repeat units follow at residues 234–258, 260–281, 282–305, 307–329, 330–354, 356–377, 379–401, and 403–427; these read MTDL…LFGL, NLTE…SISA, KNLV…IGNL, NLEL…IGKL, PELK…GFIS, LERF…LCHG, KLQS…LGDC, and TLSS…TRSN. Residues Asn389, Asn422, Asn429, Asn455, Asn464, and Asn485 are each glycosylated (N-linked (GlcNAc...) asparagine). LRR repeat units lie at residues 441-465, 466-489, 491-511, 512-537, 539-557, 558-581, 625-649, 650-673, 674-697, and 699-722; these read LHSL…IANL, STLE…ISTS, KSID…LVRI, SSLE…SMQQ, QVLV…QNGF, SKLR…FFVN, LNTF…VGLL, KELH…MGNL, IELE…LGKL, and YLAY…QFQT. Residue Asn525 is glycosylated (N-linked (GlcNAc...) asparagine). Asn571 and Asn581 each carry an N-linked (GlcNAc...) asparagine glycan. Asn656 is a glycosylation site (N-linked (GlcNAc...) asparagine). The N-linked (GlcNAc...) asparagine glycan is linked to Asn704. Residues 771-791 form a helical membrane-spanning segment; it reads AAAIGSIPGISIGLTMGYILV. At 792–811 the chain is on the cytoplasmic side; the sequence is SYKPEWLMNSGRNKRRIKPI.

The protein belongs to the RLP family.

It is found in the cell membrane. In terms of biological role, required for defense against powdery mildew pathogen. The chain is Receptor-like protein 52 from Arabidopsis thaliana (Mouse-ear cress).